The following is a 414-amino-acid chain: Snake venom metalloproteinase atrolysin-D (414 aa).

The N-terminal stretch at 1–20 is a signal peptide; it reads MIEVLLVTICLAVFPYQGSS. Positions 21–190 are excised as a propeptide; sequence IILESGNVND…KASDLNLNPD (170 aa). A Pyrrolidone carboxylic acid modification is found at glutamine 191. Residues 197–393 form the Peptidase M12B domain; sequence RYIELVVVAD…YKPQCILNKP (197 aa). Ca(2+) contacts are provided by glutamate 200 and aspartate 284. Intrachain disulfides connect cysteine 308–cysteine 388 and cysteine 348–cysteine 355. Histidine 333 lines the Zn(2+) pocket. Glutamate 334 is a catalytic residue. Zn(2+) is bound by residues histidine 337 and histidine 343. Ca(2+)-binding residues include cysteine 388 and asparagine 391. Positions 394-414 are excised as a propeptide; that stretch reads LRIDPVSTPVSGNELLEAGEE.

Belongs to the venom metalloproteinase (M12B) family. P-I subfamily. In terms of assembly, monomer. Zn(2+) is required as a cofactor. In terms of processing, the N-terminus is blocked. Expressed by the venom gland.

It localises to the secreted. It catalyses the reaction Cleavage of 5-His-|-Leu-6, 10-His-|-Leu-11, 14-Ala-|-Leu-15, 16-Tyr-|-Leu-17 and 23-Gly-|-Phe-24 of insulin B chain. With small molecule substrates prefers hydrophobic residue at P2' and small residue such as Ala, Gly at P1.. Its function is as follows. Snake venom zinc metalloproteinase that causes hemorrhage by provoking the degradation of the sub-endothelial matrix proteins (fibronectin, laminin, type IV collagen, nidogen, and gelatins). This Crotalus atrox (Western diamondback rattlesnake) protein is Snake venom metalloproteinase atrolysin-D.